The chain runs to 497 residues: MRRAVELQTVAFPETPPPSYETVMAAAPPYVPPRYLGPTEGRNSIRYSELSPLYDTTRVYLVDNKSSDIASLNYQNDHSNFLTTVVQNNDYSPIEAGTQTINFDERSRWGGDLKTILHTNMPNVNDFMFTTKFKARVMVARKTNNEGQTILEYEWAEFVLPEGNYSETMTIDLMNNAIIEHYLRVGRQHGVLESDIGVKFDTRNFRLGWDPETQLVTPGVYTNEAFHPDIVLLPGCGVDFTESRLSNILGIRKRQPFQEGFVIMYEHLEGGNIPALLDVKKYENSLQDQNTVRGDNFIALNKAARIEPVETDPKGRSYNLLPDKKNTKYRSWYLAYNYGDPEKGVRSWTLLTTPDVTGGSEQVYWSLPDMMQDPVTFRSSRQVSNYPVVAAELLPVHAKSFYNEQAVYSQLIRQSTALTRVFNRFPENQILVRPPAATITTVSENVPALTDHGTLPLRSSISGVQRVTITDARRRTCPYVYKALGIVSPRVLSSRTF.

The short motif at 293–295 is the Cell attachment site element; it reads RGD.

Belongs to the adenoviridae penton family. As to quaternary structure, interacts (via the cell attachment site RGD) with host heterodimer ITGAV-ITGB5; this interaction promotes virus internalization. Interacts with host WWP1 and WWP2. Interacts with the fiber protein (via N-terminal tail region). Interacts with the capsid vertex protein; this interaction binds the penton base to neighboring peripentonal hexons.

The protein resides in the virion. It localises to the host nucleus. Functionally, major capsid protein that self-associates to form penton base pentamers, each in the shape of a pentagon, situated at the 12 vertices of the pseudo T=25 capsid. Involved in virus secondary attachment to host cell after initial attachment by the fiber protein. Binds host integrin heterodimer ITGAV-ITGB5 (alphaV-beta5) thereby triggering clathrin-mediated endocytosis of virions. Mediates initial virus attachment to CXADR-negative cells. Binding to integrins ITGAV-ITGB5 also seems to induce macropinocytosis uptake of the virus. As the virus enters the host cell, penton proteins are shed concomitant with virion acidification in the endosome. The chain is Penton protein from Human adenovirus A serotype 12 (HAdV-12).